Consider the following 560-residue polypeptide: Clathrin interactor EPSIN 1 (560 aa).

One can recognise an ENTH domain in the interval 20-152; the sequence is LKVLKVPEME…NNKEKISEIR (133 aa). The disordered stretch occupies residues 190-288; the sequence is NFDSYKDRDS…KPSTGSANQV (99 aa). Positions 193–220 are enriched in basic and acidic residues; it reads SYKDRDSREDKNDYESFQKSRRGVKTEE. Residues 221–233 are compositionally biased toward polar residues; that stretch reads QSYTSKKSFSRYG. Residues 234 to 251 are compositionally biased toward basic and acidic residues; the sequence is STDHDNLSSGKKSPDSAK. The segment covering 274 to 287 has biased composition (polar residues); it reads GTSSNKPSTGSANQ. Residues 296–300 carry the Clathrin binding motif; that stretch reads IGDFL. The short motif at 320–322 is the ALPHA-ADR binding element; the sequence is DLF. The segment covering 414–439 has biased composition (polar residues); the sequence is SHSASVSTGPQAPSVHGSATNTTSPL. Disordered regions lie at residues 414–453 and 517–560; these read SHSA…QKKD and LGKT…GFKQ. Low complexity predominate over residues 526–536; it reads QQQQQQQQQQQ. The span at 544–554 shows a compositional bias: polar residues; the sequence is FFSSLSNQRYQ.

The protein belongs to the epsin family. Interacts with clathrin, VTI11, GAMMA-ADR and VSR1. Binds to the deubiquitinating enzyme AMSH3. As to expression, mostly expressed in cotyledons and flowers, and, to a lower extent, in roots, leaves and siliques (at protein level).

It is found in the golgi apparatus. Its subcellular location is the prevacuolar compartment. It localises to the cytoplasm. The protein localises to the cytoplasmic vesicle. The protein resides in the clathrin-coated vesicle. It is found in the cytoskeleton. In terms of biological role, may have a role in transport via clathrin-coated vesicles from the trans-Golgi network to endosomes. Stimulates clathrin assembly. Does not seem to bind to phospholipids. Plays an important role in the vacuolar trafficking of soluble cargo proteins at the trans-Golgi network. The sequence is that of Clathrin interactor EPSIN 1 (EPSIN1) from Arabidopsis thaliana (Mouse-ear cress).